The chain runs to 276 residues: AT-hook motif nuclear-localized protein 17 (276 aa).

The span at 1 to 10 (MKGEYREQKS) shows a compositional bias: basic and acidic residues. Disordered regions lie at residues 1-80 (MKGE…RDTD) and 212-248 (AEEE…SGGE). Low complexity-rich tracts occupy residues 20–31 (HQQQQQQQQQQH) and 40–49 (SSTVTPTVDD). Residues 56–68 (RRPRGRPPGSKNK) constitute a DNA-binding region (a.T hook). A PPC domain is found at 80–230 (DPPMSPYILE…GTGEREGQSP (151 aa)). Residues 212-227 (AEEEQKHSAGTGEREG) show a composition bias toward basic and acidic residues. The segment covering 233 to 248 (SGGGEESGQMAGSGGE) has biased composition (gly residues).

It localises to the nucleus. Functionally, transcription factor that specifically binds AT-rich DNA sequences related to the nuclear matrix attachment regions (MARs). The sequence is that of AT-hook motif nuclear-localized protein 17 from Arabidopsis thaliana (Mouse-ear cress).